The primary structure comprises 135 residues: Transcription antitermination protein NusB (135 aa).

It belongs to the NusB family.

In terms of biological role, involved in transcription antitermination. Required for transcription of ribosomal RNA (rRNA) genes. Binds specifically to the boxA antiterminator sequence of the ribosomal RNA (rrn) operons. This is Transcription antitermination protein NusB from Clostridium perfringens (strain SM101 / Type A).